The primary structure comprises 938 residues: Catenin delta-1 (938 aa).

At methionine 1 the chain carries N-acetylmethionine. Positions 1–357 (MDDSEVESTA…ASLDSLRKGM (357 aa)) are necessary and sufficient for interaction with CCDC85B. Serine 4 is subject to Phosphoserine. Positions 10–46 (ASILASVKEQEAQFEKLTRALEEERRHVSAQLERVRV) form a coiled coil. The residue at position 47 (serine 47) is a Phosphoserine. Threonine 59 carries the phosphothreonine modification. The residue at position 112 (tyrosine 112) is a Phosphotyrosine; by FYN. Serine 125 is subject to Phosphoserine. Phosphotyrosine is present on residues tyrosine 217 and tyrosine 221. Serine 225 is subject to Phosphoserine. Tyrosine 228 is modified (phosphotyrosine). Phosphoserine is present on residues serine 230 and serine 252. A Phosphotyrosine modification is found at tyrosine 257. Phosphoserine occurs at positions 268 and 269. Tyrosine 280 is subject to Phosphotyrosine. Serine 288 bears the Phosphoserine mark. The residue at position 291 (tyrosine 291) is a Phosphotyrosine. Serine 300 is modified (phosphoserine). Residue threonine 304 is modified to Phosphothreonine. Serine 320, serine 346, serine 349, and serine 352 each carry phosphoserine. ARM repeat units follow at residues 358–395 (PPPS…HLCY), 398–437 (DKVK…NISF), 441–475 (QDNK…ITGT), and 476–516 (LWNL…NEDC). A Glycyl lysine isopeptide (Lys-Gly) (interchain with G-Cter in SUMO2) cross-link involves residue lysine 421. Lysine 517 participates in a covalent cross-link: Glycyl lysine isopeptide (Lys-Gly) (interchain with G-Cter in SUMO2). ARM repeat units lie at residues 534 to 573 (LRNV…DSDS), 583 to 624 (LRNL…AKKG), 653 to 693 (ARGY…NLCA), 700 to 739 (RYIR…NLAV), 740 to 780 (DARN…SILN), and 781 to 826 (TINE…ALVL). Serine 617 carries the post-translational modification Phosphoserine. Positions 622 to 629 (KKGKDEWF) match the Nuclear localization signal (NLS) motif. Phosphoserine is present on serine 713. Serine 811, serine 847, serine 857, serine 859, serine 861, and serine 864 each carry phosphoserine. The tract at residues 855–938 (NASRSQSSHS…LKGAPLMQKI (84 aa)) is disordered. Tyrosine 865 is modified (phosphotyrosine). Serine 868 bears the Phosphoserine mark. The residue at position 869 (threonine 869) is a Phosphothreonine. A compositionally biased stretch (basic and acidic residues) spans 875–888 (RNQKSDKKPDREEI). Serine 879 bears the Phosphoserine mark. A Glycyl lysine isopeptide (Lys-Gly) (interchain with G-Cter in SUMO2) cross-link involves residue lysine 882. The span at 892 to 908 (NMGSNTKSLDNNYSTLN) shows a compositional bias: polar residues. The residue at position 899 (serine 899) is a Phosphoserine. A Phosphotyrosine modification is found at tyrosine 904. Residues threonine 906 and threonine 916 each carry the phosphothreonine modification. The segment covering 909-922 (ERGDHNRTLDRSGD) has biased composition (basic and acidic residues). Serine 920 bears the Phosphoserine mark.

This sequence belongs to the beta-catenin family. As to quaternary structure, belongs to a multiprotein cell-cell adhesion complex that also contains E-cadherin/CDH1, alpha-catenin/CTNNA1, beta-catenin/CTNNB1, and gamma-catenin/JUP. Binds to the C-terminal fragment of PSEN1 and mutually competes for CDH1. Interacts with ZBTB33. Interacts with GLIS2. Interacts with FER. Interacts with NANOS1 (via N-terminal region). Interacts (via N-terminus) with GNA12; the interaction regulates CDH1-mediated cell-cell adhesion. Interacts with GNA13. Component of a cadherin:catenin adhesion complex composed of at least of CDH26, beta-catenin/CTNNB1, alpha-catenin/CTNNA1 and p120 catenin/CTNND1. Interacts with CCDC85B. Interacts with PLPP3; negatively regulates the PLPP3-mediated stabilization of CTNNB1. Interacts with DSG3; the interaction facilitates DSG3 localization and retention at cell-cell junctions. Interacts with CTNND1/p120-catenin; the interaction controls CADH5 endocytosis. Phosphorylated by FER and other protein-tyrosine kinases. Phosphorylated at Ser-288 by PAK5. Dephosphorylated by PTPRJ. In terms of tissue distribution, expressed in basal keratinocytes (at protein level).

The protein resides in the cell junction. It is found in the adherens junction. The protein localises to the cytoplasm. Its subcellular location is the nucleus. It localises to the cell membrane. Key regulator of cell-cell adhesion that associates with and regulates the cell adhesion properties of both C-, E- and N-cadherins, being critical for their surface stability. Promotes localization and retention of DSG3 at cell-cell junctions, via its interaction with DSG3. Beside cell-cell adhesion, regulates gene transcription through several transcription factors including ZBTB33/Kaiso2 and GLIS2, and the activity of Rho family GTPases and downstream cytoskeletal dynamics. Implicated both in cell transformation by SRC and in ligand-induced receptor signaling through the EGF, PDGF, CSF-1 and ERBB2 receptors. This is Catenin delta-1 (Ctnnd1) from Mus musculus (Mouse).